Consider the following 287-residue polypeptide: Syntaxin-11 (287 aa).

Residues 41-71 adopt a coiled-coil conformation; it reads LESLYRDIRDIQDENQLLVADVKRLGKQNAR. Residues 204 to 266 enclose the t-SNARE coiled-coil homology domain; the sequence is LNEIESRHRE…GQAKAQVRKA (63 aa).

It belongs to the syntaxin family. As to quaternary structure, interacts with the SNARE proteins SNAP-23 and VAMP.

The protein localises to the membrane. It is found in the golgi apparatus. It localises to the trans-Golgi network membrane. SNARE that acts to regulate protein transport between late endosomes and the trans-Golgi network. The sequence is that of Syntaxin-11 (STX11) from Homo sapiens (Human).